A 206-amino-acid chain; its full sequence is Large ribosomal subunit protein mL62 (206 aa).

Residues 1-29 (MAATRCLRWGLSRAGVWLLPPPARCPRRA) constitute a mitochondrion transit peptide. Q90 bears the N5-methylglutamine mark.

The protein belongs to the prokaryotic/mitochondrial release factor family. Mitochondrion-specific ribosomal protein mL62 subfamily. In terms of assembly, component of the mitochondrial large ribosomal subunit (mt-LSU). Mature mammalian 55S mitochondrial ribosomes consist of a small (28S) and a large (39S) subunit. The 28S small subunit contains a 12S ribosomal RNA (12S mt-rRNA) and 30 different proteins. The 39S large subunit contains a 16S rRNA (16S mt-rRNA), a copy of mitochondrial valine transfer RNA (mt-tRNA(Val)), which plays an integral structural role, and 52 different proteins. Post-translationally, methylation of glutamine in the GGQ triplet by HEMK1. Down-regulated during the in vitro differentiation of HT29-D4 colon carcinoma cells.

Its subcellular location is the mitochondrion. It catalyses the reaction an N-acyl-L-alpha-aminoacyl-tRNA + H2O = an N-acyl-L-amino acid + a tRNA + H(+). Essential peptidyl-tRNA hydrolase component of the mitochondrial large ribosomal subunit. Acts as a codon-independent translation release factor that has lost all stop codon specificity and directs the termination of translation in mitochondrion, possibly in case of abortive elongation. Involved in the hydrolysis of peptidyl-tRNAs that have been prematurely terminated and thus in the recycling of stalled mitochondrial ribosomes. The protein is Large ribosomal subunit protein mL62 of Homo sapiens (Human).